The primary structure comprises 267 residues: Matrilysin (267 aa).

A signal peptide spans 1-20 (MAAMRLTLFRIVCLLPGCLA). Positions 21–97 (LPLSQEAGEV…PRCGVPDVAE (77 aa)) are cleaved as a propeptide — activation peptide. Positions 88–95 (PRCGVPDV) match the Cysteine switch motif. Cys90 serves as a coordination point for Zn(2+). Asp156 contributes to the Ca(2+) binding site. Positions 166 and 168 each coordinate Zn(2+). Positions 173, 174, 176, and 178 each coordinate Ca(2+). His181 provides a ligand contact to Zn(2+). Residues Gly188, Gly190, and Asp192 each contribute to the Ca(2+) site. His194 contacts Zn(2+). Ca(2+)-binding residues include Asp196 and Glu199. His217 contributes to the Zn(2+) binding site. The active site involves Glu218. 2 residues coordinate Zn(2+): His221 and His227.

Belongs to the peptidase M10A family. Ca(2+) serves as cofactor. Requires Zn(2+) as cofactor.

It is found in the secreted. The protein resides in the extracellular space. Its subcellular location is the extracellular matrix. The catalysed reaction is Cleavage of 14-Ala-|-Leu-15 and 16-Tyr-|-Leu-17 in B chain of insulin. No action on collagen types I, II, IV, V. Cleaves gelatin chain alpha2(I) &gt; alpha1(I).. Degrades casein, gelatins of types I, III, IV, and V, and fibronectin. Activates procollagenase. This chain is Matrilysin (Mmp7), found in Rattus norvegicus (Rat).